A 126-amino-acid chain; its full sequence is Glycine cleavage system H protein (126 aa).

The 83-residue stretch at 20–102 folds into the Lipoyl-binding domain; the sequence is IGTIGITDYA…LGDGWFFKVR (83 aa). Lys61 is modified (N6-lipoyllysine).

This sequence belongs to the GcvH family. As to quaternary structure, the glycine cleavage system is composed of four proteins: P, T, L and H. The cofactor is (R)-lipoate.

Functionally, the glycine cleavage system catalyzes the degradation of glycine. The H protein shuttles the methylamine group of glycine from the P protein to the T protein. The chain is Glycine cleavage system H protein from Rhodospirillum rubrum (strain ATCC 11170 / ATH 1.1.1 / DSM 467 / LMG 4362 / NCIMB 8255 / S1).